A 78-amino-acid polypeptide reads, in one-letter code: UPF0270 protein YE3952 (78 aa).

Belongs to the UPF0270 family.

In Yersinia enterocolitica serotype O:8 / biotype 1B (strain NCTC 13174 / 8081), this protein is UPF0270 protein YE3952.